A 546-amino-acid chain; its full sequence is Protein phosphatase 1G (546 aa).

Residue Gly-2 is the site of N-myristoyl glycine attachment. Arg-22 carries the omega-N-methylarginine modification. The region spanning 26-505 is the PPM-type phosphatase domain; sequence PYGFSAMQGW…DNMTCIIICF (480 aa). Residues Asp-60 and Gly-61 each coordinate Mn(2+). Disordered regions lie at residues 116–139 and 161–328; these read QIAG…DVDN and GQNC…SDSG. Residue Thr-122 is modified to Phosphothreonine. Positions 123–139 are enriched in acidic residues; it reads EDEDEKEKVADEDDVDN. Ser-183 carries the post-translational modification Phosphoserine. Positions 259–312 are enriched in acidic residues; it reads DSEDESDEAEEEEEDSEECSEEEDGYSSEEAENEEDEDDTEEAEEDDEEEEEEM. Lys-383 carries the N6-acetyllysine modification. Positions 441 and 496 each coordinate Mn(2+). The disordered stretch occupies residues 512 to 546; the sequence is ELQPESGKRKLEEVLSTEGAEENGNSDKKKKAKRD. Ser-527 is subject to Phosphoserine.

Belongs to the PP2C family. As to quaternary structure, interacts with NOL3; may dephosphorylate NOL3. It depends on Mg(2+) as a cofactor. Requires Mn(2+) as cofactor. Widely expressed. Most abundant in testis, skeletal muscle, and heart.

It is found in the cytoplasm. The protein resides in the membrane. It catalyses the reaction O-phospho-L-seryl-[protein] + H2O = L-seryl-[protein] + phosphate. It carries out the reaction O-phospho-L-threonyl-[protein] + H2O = L-threonyl-[protein] + phosphate. The protein is Protein phosphatase 1G (PPM1G) of Homo sapiens (Human).